A 408-amino-acid chain; its full sequence is S-adenosylmethionine synthase (408 aa).

142–147 (GEGSGD) is an ATP binding site.

The protein belongs to the AdoMet synthase 2 family. Requires Mg(2+) as cofactor.

The enzyme catalyses L-methionine + ATP + H2O = S-adenosyl-L-methionine + phosphate + diphosphate. Its pathway is amino-acid biosynthesis; S-adenosyl-L-methionine biosynthesis; S-adenosyl-L-methionine from L-methionine: step 1/1. Functionally, catalyzes the formation of S-adenosylmethionine from methionine and ATP. The chain is S-adenosylmethionine synthase from Halobacterium salinarum (strain ATCC 29341 / DSM 671 / R1).